Reading from the N-terminus, the 267-residue chain is 2-keto-3-deoxy-L-rhamnonate aldolase (267 aa).

H49 serves as the catalytic Proton acceptor. Position 151 (Q151) interacts with substrate. Residue E153 participates in Mg(2+) binding. Substrate is bound by residues A178 and D179. D179 contributes to the Mg(2+) binding site.

The protein belongs to the HpcH/HpaI aldolase family. KDR aldolase subfamily. In terms of assembly, homohexamer. It depends on Mg(2+) as a cofactor.

It carries out the reaction 2-dehydro-3-deoxy-L-rhamnonate = (S)-lactaldehyde + pyruvate. Its function is as follows. Catalyzes the reversible retro-aldol cleavage of 2-keto-3-deoxy-L-rhamnonate (KDR) to pyruvate and lactaldehyde. The chain is 2-keto-3-deoxy-L-rhamnonate aldolase from Escherichia coli O17:K52:H18 (strain UMN026 / ExPEC).